Reading from the N-terminus, the 917-residue chain is Ion channel POLLUX (917 aa).

A disordered region spans residues 1–154 (MIPLPVAAAN…SSSPVARPQH (154 aa)). Positions 7–19 (AAANSNSNSNSNS) are enriched in low complexity. Over residues 78–89 (HQWNYPSFLGTT) the composition is skewed to polar residues. The segment covering 119 to 136 (KTNTNTNTNTNTNTNTNT) has biased composition (low complexity). Helical transmembrane passes span 160-180 (PPIF…SSYL), 230-250 (LYIV…LDYL), 290-310 (LALL…LYAV), and 342-362 (VVSV…LGLV). RCK N-terminal domains follow at residues 383 to 524 (RNHI…ETVV) and 643 to 792 (PEKI…DKSI). The stretch at 413–435 (VIVVLAEKEKEEMEMDITKLEFD) forms a coiled coil.

It belongs to the castor/pollux (TC 1.A.1.23) family. In terms of assembly, homooligomer. Mainly expressed in nodules. Also detected in infected and uninfected roots, leaves, seed pods, and flower buds.

Its subcellular location is the nucleus membrane. Functionally, ion channel with permeability for potassium. Involved in perinuclear calcium spiking but not in cytosolic calcium influx. Required for early signal transduction events leading to endosymbiosis. Acts early in a signal transduction chain leading from the perception of Nod factor to the activation of calcium spiking. Also involved in fungal entry into root epidermal cells during the establishment of the arbuscular mycorrhizal symbiosis. This is Ion channel POLLUX (POLLUX) from Lotus japonicus (Lotus corniculatus var. japonicus).